A 515-amino-acid chain; its full sequence is GMP synthase [glutamine-hydrolyzing] (515 aa).

One can recognise a Glutamine amidotransferase type-1 domain in the interval 10–200; sequence TIIVLDFGSQ…VFGVCGCSEG (191 aa). Residue Cys-87 is the Nucleophile of the active site. Active-site residues include His-174 and Glu-176. The region spanning 201–390 is the GMPS ATP-PPase domain; that stretch reads WNMENFIEVE…LGIPDEIVWR (190 aa). Position 228 to 234 (228 to 234) interacts with ATP; the sequence is SGGVDSS.

In terms of assembly, homodimer.

The enzyme catalyses XMP + L-glutamine + ATP + H2O = GMP + L-glutamate + AMP + diphosphate + 2 H(+). The protein operates within purine metabolism; GMP biosynthesis; GMP from XMP (L-Gln route): step 1/1. Its function is as follows. Catalyzes the synthesis of GMP from XMP. This Bacillus cereus (strain ATCC 14579 / DSM 31 / CCUG 7414 / JCM 2152 / NBRC 15305 / NCIMB 9373 / NCTC 2599 / NRRL B-3711) protein is GMP synthase [glutamine-hydrolyzing].